The sequence spans 600 residues: MPDADTTDDPGDLRTPIVAVLGHVDHGKTSLLDKIRGSAVIEGEAGAITQHIGATAVPLDTVSEVAGSLVDPTEFDLPGLLFIDTPGHHSFSTLRSRGGALADIAILVVDVNDGFQPQTEEAIRILKDTGTPFVVAANKIDTTPGWNPNPDAPVQGTYDDQSDRVRSDLDDALYELIGEMSDAGFSSDLYWRVQNFQKNVGVIPVSAETGEGVPDLLTVLMGLAQRYMKSEMEVTIDGPGAGTVLEVKDEQGFGTTVDVILYDGTIRSGDTVVVGAQPEPIVTDVRALLKPGDLAEMRTEKRFGNVDRMQAAAGLKVAAPDLDDAMAGAPIRVVGDRDVADVVTEVEAELAEVAVETGEEGIVVKADTLGSLEALVSALEEAEIPVMSAEVGDVAPRDVAMATTVDSEKHRVLLGFNVDVLPAAAENAERESVRVFNSDVIYQLVEDYEAFVDAQEREQKEAVFDNIVRPARFRILKDHVFRQNDPAVVGVEVVSGTLKRNTPVGGIEGNDLDRAGIVKGIQDQGEDVDEARAGNRVSVSIDGPTVGRDIKEGDELWVDLPEKHAKVLDQELTSDLPADEREALKSYLDIMRKRDPFWGK.

Residues 13 to 228 (LRTPIVAVLG…VLMGLAQRYM (216 aa)) form the tr-type G domain. The segment at 22–29 (GHVDHGKT) is G1. Residue 22–29 (GHVDHGKT) participates in GTP binding. A G2 region spans residues 47–51 (AITQH). The segment at 84–87 (DTPG) is G3. GTP is bound by residues 84-88 (DTPGH) and 138-141 (NKID). The segment at 138–141 (NKID) is G4. Residues 140 to 162 (IDTTPGWNPNPDAPVQGTYDDQS) are disordered. The tract at residues 206–208 (SAE) is G5.

This sequence belongs to the TRAFAC class translation factor GTPase superfamily. Classic translation factor GTPase family. IF-2 subfamily.

In terms of biological role, function in general translation initiation by promoting the binding of the formylmethionine-tRNA to ribosomes. Seems to function along with eIF-2. This is Probable translation initiation factor IF-2 from Halobacterium salinarum (strain ATCC 700922 / JCM 11081 / NRC-1) (Halobacterium halobium).